The following is a 445-amino-acid chain: Probable D-serine dehydratase (445 aa).

At K111 the chain carries N6-(pyridoxal phosphate)lysine.

The protein belongs to the serine/threonine dehydratase family. DsdA subfamily. It depends on pyridoxal 5'-phosphate as a cofactor.

The enzyme catalyses D-serine = pyruvate + NH4(+). The sequence is that of Probable D-serine dehydratase from Burkholderia pseudomallei (strain 668).